Reading from the N-terminus, the 244-residue chain is Transcriptional activator protein PhzR (244 aa).

An HTH luxR-type domain is found at 177-242 (AFNTDVEFSE…QAVSYAVALG (66 aa)). Residues 201–220 (SEEIGVIMGVCTDTVNYHHR) constitute a DNA-binding region (H-T-H motif).

This sequence belongs to the autoinducer-regulated transcriptional regulatory protein family.

In terms of biological role, positive regulator of phenazine antibiotic production. May activate the phenazine biosynthetic genes by binding to a DNA sequence upstream of them, or to an intermediate gene which, in turn, interacts with them. The protein is Transcriptional activator protein PhzR (phzR) of Pseudomonas fluorescens.